Reading from the N-terminus, the 103-residue chain is Large ribosomal subunit protein bL21 (103 aa).

This sequence belongs to the bacterial ribosomal protein bL21 family. Part of the 50S ribosomal subunit. Contacts protein L20.

Its function is as follows. This protein binds to 23S rRNA in the presence of protein L20. The chain is Large ribosomal subunit protein bL21 from Paracidovorax citrulli (strain AAC00-1) (Acidovorax citrulli).